A 366-amino-acid polypeptide reads, in one-letter code: Transcription factor MYB61 (366 aa).

HTH myb-type domains are found at residues 9 to 61 (KQKL…INYL) and 62 to 116 (RPDL…KKKL). DNA-binding regions (H-T-H motif) lie at residues 37–61 (WSSVPKLAGLQRCGKSCRLRWINYL) and 89–112 (WSQIASRLPGRTDNEIKNLWNSSI). The tract at residues 115–164 (KLKQRGIDPNTHKPISEVESFSDKDKPTTSNNKRSGNDHKSPSSSSATNQ) is disordered. Residues 124–141 (NTHKPISEVESFSDKDKP) show a composition bias toward basic and acidic residues.

Expressed specifically in guard cells. Expressed in sink tissues, such as xylem, roots and developing seeds.

The protein localises to the nucleus. Functionally, transcription factor that coordinates a small network of downstream target genes required for several aspects of plant growth and development, such as xylem formation and xylem cell differentiation, and lateral root formation. Regulates a specific set of target genes by binding DNA to the AC cis-element 5'-ACCTAC-3'. Functions as a transcriptional regulator of stomatal closure. Plays a role the regulation of stomatal pore size independently of abscisic acid (ABA). Required for seed coat mucilage deposition during the development of the seed coat epidermis. Involved in the induction of trichome initiation and branching by positively regulating GL1 and GL2. Required for gibberellin (GA) biosynthesis and degradation by positively affecting the expression of the enzymes that convert GA9 into the bioactive GA4, as well as the enzymes involved in the degradation of GA4. This Arabidopsis thaliana (Mouse-ear cress) protein is Transcription factor MYB61.